The sequence spans 497 residues: Serine hydroxymethyltransferase (497 aa).

(6S)-5,6,7,8-tetrahydrofolate contacts are provided by residues Leu176 and 180–182 (GHL). Lys289 is modified (N6-(pyridoxal phosphate)lysine).

Belongs to the SHMT family. As to quaternary structure, homodimer. Pyridoxal 5'-phosphate is required as a cofactor.

Its subcellular location is the cytoplasm. It carries out the reaction (6R)-5,10-methylene-5,6,7,8-tetrahydrofolate + glycine + H2O = (6S)-5,6,7,8-tetrahydrofolate + L-serine. Its pathway is one-carbon metabolism; tetrahydrofolate interconversion. It participates in amino-acid biosynthesis; glycine biosynthesis; glycine from L-serine: step 1/1. Its function is as follows. Catalyzes the reversible interconversion of serine and glycine with tetrahydrofolate (THF) serving as the one-carbon carrier. This reaction serves as the major source of one-carbon groups required for the biosynthesis of purines, thymidylate, methionine, and other important biomolecules. Also exhibits THF-independent aldolase activity toward beta-hydroxyamino acids, producing glycine and aldehydes, via a retro-aldol mechanism. This Chlamydia trachomatis serovar L2b (strain UCH-1/proctitis) protein is Serine hydroxymethyltransferase.